The following is a 173-amino-acid chain: Photosystem I assembly protein Ycf3 (173 aa).

TPR repeat units lie at residues 35-68 (AYVYYRDGLSAQNDGDYAEALENYEESLKLEENA), 72-105 (GETLKNIAIIYMSNGEEERALETYQKALDENPKQ), and 120-153 (GRTAEEEGRRDDADGWFDQAANVWTQAVRLNPGG).

This sequence belongs to the Ycf3 family.

It is found in the cellular thylakoid membrane. In terms of biological role, essential for the assembly of the photosystem I (PSI) complex. May act as a chaperone-like factor to guide the assembly of the PSI subunits. The polypeptide is Photosystem I assembly protein Ycf3 (Synechococcus sp. (strain CC9311)).